The primary structure comprises 107 residues: Benzene 1,2-dioxygenase system ferredoxin subunit (107 aa).

The region spanning 4–99 (TYILRQSDLP…IKVEGDEVHV (96 aa)) is the Rieske domain. Residues Cys-43, His-45, Cys-62, and His-65 each coordinate [2Fe-2S] cluster.

The protein belongs to the bacterial ring-hydroxylating dioxygenase ferredoxin component family. As to quaternary structure, this dioxygenase system consists of four proteins: the two subunits of the hydroxylase component (BnzA and BnzB), a ferredoxin (BnzC) and a ferredoxin reductase (BnzD).

It participates in aromatic compound metabolism; benzene degradation; catechol from benzene: step 1/2. In terms of biological role, this protein seems to be a 2Fe-2S ferredoxin. This Pseudomonas putida (Arthrobacter siderocapsulatus) protein is Benzene 1,2-dioxygenase system ferredoxin subunit (bnzC).